A 307-amino-acid chain; its full sequence is NAD kinase (307 aa).

The Proton acceptor role is filled by Asp-85. Residues 85–86 (DG), Arg-90, 159–160 (NE), Asp-189, and 200–205 (TAYAFS) each bind NAD(+).

Belongs to the NAD kinase family. A divalent metal cation serves as cofactor.

The protein resides in the cytoplasm. It catalyses the reaction NAD(+) + ATP = ADP + NADP(+) + H(+). Its function is as follows. Involved in the regulation of the intracellular balance of NAD and NADP, and is a key enzyme in the biosynthesis of NADP. Catalyzes specifically the phosphorylation on 2'-hydroxyl of the adenosine moiety of NAD to yield NADP. In Mycobacterium bovis (strain ATCC BAA-935 / AF2122/97), this protein is NAD kinase.